Here is a 943-residue protein sequence, read N- to C-terminus: Isoleucine--tRNA ligase (943 aa).

The 'HIGH' region signature appears at 58 to 68 (PYANGTIHIGH). E567 contacts L-isoleucyl-5'-AMP. The short motif at 608-612 (KMSKS) is the 'KMSKS' region element. K611 serves as a coordination point for ATP. Residues C906, C909, C926, and C929 each coordinate Zn(2+).

The protein belongs to the class-I aminoacyl-tRNA synthetase family. IleS type 1 subfamily. Monomer. It depends on Zn(2+) as a cofactor.

The protein resides in the cytoplasm. It catalyses the reaction tRNA(Ile) + L-isoleucine + ATP = L-isoleucyl-tRNA(Ile) + AMP + diphosphate. Functionally, catalyzes the attachment of isoleucine to tRNA(Ile). As IleRS can inadvertently accommodate and process structurally similar amino acids such as valine, to avoid such errors it has two additional distinct tRNA(Ile)-dependent editing activities. One activity is designated as 'pretransfer' editing and involves the hydrolysis of activated Val-AMP. The other activity is designated 'posttransfer' editing and involves deacylation of mischarged Val-tRNA(Ile). This chain is Isoleucine--tRNA ligase, found in Pseudomonas syringae pv. tomato (strain ATCC BAA-871 / DC3000).